The following is a 218-amino-acid chain: C-type lectin domain family 2 member H (218 aa).

Residues methionine 1 to cysteine 52 are Cytoplasmic-facing. A helical; Signal-anchor for type II membrane protein transmembrane segment spans residues cysteine 53–valine 73. At arginine 74–valine 218 the chain is on the extracellular side. A disulfide bond links cysteine 90 and cysteine 101. In terms of domain architecture, C-type lectin spans phenylalanine 97–serine 201. An N-linked (GlcNAc...) asparagine glycan is attached at asparagine 110. A disulfide bridge connects residues cysteine 118 and cysteine 200.

As to expression, detected in ileum, liver, kidney and in IL2-activated natural killer cells.

Its subcellular location is the cell membrane. Functionally, lectin-type cell surface receptor. In Mus musculus (Mouse), this protein is C-type lectin domain family 2 member H (Clec2h).